The primary structure comprises 215 residues: Cytochrome b6 (215 aa).

The chain crosses the membrane as a helical span at residues 32–52; it reads IFYCLGGITLTCFLVQVATGF. Residue Cys35 participates in heme c binding. Heme b-binding residues include His86 and His100. A run of 3 helical transmembrane segments spans residues 90–110, 116–136, and 186–206; these read ASMM…TGGF, LTWV…VTGY, and LHTF…FLMI. Residues His187 and His202 each coordinate heme b.

This sequence belongs to the cytochrome b family. PetB subfamily. The 4 large subunits of the cytochrome b6-f complex are cytochrome b6, subunit IV (17 kDa polypeptide, PetD), cytochrome f and the Rieske protein, while the 4 small subunits are PetG, PetL, PetM and PetN. The complex functions as a dimer. Requires heme b as cofactor. It depends on heme c as a cofactor.

The protein localises to the plastid. Its subcellular location is the chloroplast thylakoid membrane. In terms of biological role, component of the cytochrome b6-f complex, which mediates electron transfer between photosystem II (PSII) and photosystem I (PSI), cyclic electron flow around PSI, and state transitions. The sequence is that of Cytochrome b6 from Morus indica (Mulberry).